Consider the following 419-residue polypeptide: Altered inheritance of mitochondria protein 6 (419 aa).

Positions 1–31 are cleaved as a signal peptide; the sequence is MLPPFIVAGLFSSYILIMGLMFSQISHVSNS.

It belongs to the AIM6 family.

The chain is Altered inheritance of mitochondria protein 6 (AIM6) from Kluyveromyces lactis (strain ATCC 8585 / CBS 2359 / DSM 70799 / NBRC 1267 / NRRL Y-1140 / WM37) (Yeast).